The primary structure comprises 490 residues: Cobyric acid synthase (490 aa).

The GATase cobBQ-type domain occupies alanine 252–leucine 428. Cysteine 333 acts as the Nucleophile in catalysis. Residue histidine 420 is part of the active site.

Belongs to the CobB/CobQ family. CobQ subfamily.

Its pathway is cofactor biosynthesis; adenosylcobalamin biosynthesis. Functionally, catalyzes amidations at positions B, D, E, and G on adenosylcobyrinic A,C-diamide. NH(2) groups are provided by glutamine, and one molecule of ATP is hydrogenolyzed for each amidation. This is Cobyric acid synthase from Mycolicibacterium vanbaalenii (strain DSM 7251 / JCM 13017 / BCRC 16820 / KCTC 9966 / NRRL B-24157 / PYR-1) (Mycobacterium vanbaalenii).